The sequence spans 111 residues: uncharacterized protein (111 aa).

Residues 43–72 form a disordered region; it reads NGRAEETEADAPLPEEPSLPDLPDLSDLDS. The segment covering 61–72 has biased composition (low complexity); sequence LPDLPDLSDLDS.

This is an uncharacterized protein from Homo sapiens (Human).